The primary structure comprises 413 residues: Branched-chain-amino-acid aminotransferase 3, chloroplastic (413 aa).

A chloroplast-targeting transit peptide spans 1-60 (MERAAILPSVNQNYLLCPSRAFSTRLHSSTRNLSPPSFASIKLQHSSSSVSSNGGISLTR). At lysine 259 the chain carries N6-(pyridoxal phosphate)lysine.

Belongs to the class-IV pyridoxal-phosphate-dependent aminotransferase family. It depends on pyridoxal 5'-phosphate as a cofactor. As to expression, expressed in the phloem cells.

The protein resides in the plastid. It is found in the chloroplast. The enzyme catalyses L-leucine + 2-oxoglutarate = 4-methyl-2-oxopentanoate + L-glutamate. It catalyses the reaction L-isoleucine + 2-oxoglutarate = (S)-3-methyl-2-oxopentanoate + L-glutamate. It carries out the reaction L-valine + 2-oxoglutarate = 3-methyl-2-oxobutanoate + L-glutamate. The catalysed reaction is a 2-oxocarboxylate + L-methionine = 4-methylsulfanyl-2-oxobutanoate + an L-alpha-amino acid. It functions in the pathway amino-acid biosynthesis; L-isoleucine biosynthesis; L-isoleucine from 2-oxobutanoate: step 4/4. It participates in amino-acid biosynthesis; L-leucine biosynthesis; L-leucine from 3-methyl-2-oxobutanoate: step 4/4. The protein operates within amino-acid biosynthesis; L-valine biosynthesis; L-valine from pyruvate: step 4/4. Inhibited by Ser- or Thr-derived imine. In terms of biological role, converts 2-oxo acids to branched-chain amino acids. Acts on leucine, isoleucine and valine. Also involved in methionine chain elongation cycle of aliphatic glucosinolate formation. Catalyzes the conversion of 5-methylthiopentyl-2-oxo and 6-methylthiohexyl-2-oxo acids to their respective Met derivatives, homomethionine and dihomo-methionine, respectively. The polypeptide is Branched-chain-amino-acid aminotransferase 3, chloroplastic (Arabidopsis thaliana (Mouse-ear cress)).